Reading from the N-terminus, the 360-residue chain is Peptide chain release factor 1 (360 aa).

The residue at position 234 (Gln234) is an N5-methylglutamine.

Belongs to the prokaryotic/mitochondrial release factor family. In terms of processing, methylated by PrmC. Methylation increases the termination efficiency of RF1.

It is found in the cytoplasm. Functionally, peptide chain release factor 1 directs the termination of translation in response to the peptide chain termination codons UAG and UAA. The chain is Peptide chain release factor 1 from Clostridium perfringens (strain 13 / Type A).